Consider the following 215-residue polypeptide: tRNA (guanine-N(7)-)-methyltransferase (215 aa).

S-adenosyl-L-methionine-binding residues include D43, E68, N95, and D121. D121 is a catalytic residue. Substrate contacts are provided by K125 and D157.

The protein belongs to the class I-like SAM-binding methyltransferase superfamily. TrmB family.

It catalyses the reaction guanosine(46) in tRNA + S-adenosyl-L-methionine = N(7)-methylguanosine(46) in tRNA + S-adenosyl-L-homocysteine. It participates in tRNA modification; N(7)-methylguanine-tRNA biosynthesis. Its function is as follows. Catalyzes the formation of N(7)-methylguanine at position 46 (m7G46) in tRNA. The chain is tRNA (guanine-N(7)-)-methyltransferase from Trichormus variabilis (strain ATCC 29413 / PCC 7937) (Anabaena variabilis).